A 202-amino-acid chain; its full sequence is MIDYVSGTLVDKTTDSALVDVNGLGYRVHVPTSTYKRLPDTDEEVTLHTYHYLREDDESLYGFATKAERTVFETMTGVSRVGPKLALSALSAMTPTELRDHVMEGDKSRLTQISGVGTKTADRLIVELRDRLADLDVLEDTSPLSGGSDARAEARADALEALTELGLSKADAERSIRQVLRDNAGIQSADELVRRALKADQE.

The tract at residues 1–64 (MIDYVSGTLV…EDDESLYGFA (64 aa)) is domain I. Residues 65-143 (TKAERTVFET…DLDVLEDTSP (79 aa)) are domain II. The segment at 144 to 149 (LSGGSD) is flexible linker. Positions 150–202 (ARAEARADALEALTELGLSKADAERSIRQVLRDNAGIQSADELVRRALKADQE) are domain III.

Belongs to the RuvA family. Homotetramer. Forms an RuvA(8)-RuvB(12)-Holliday junction (HJ) complex. HJ DNA is sandwiched between 2 RuvA tetramers; dsDNA enters through RuvA and exits via RuvB. An RuvB hexamer assembles on each DNA strand where it exits the tetramer. Each RuvB hexamer is contacted by two RuvA subunits (via domain III) on 2 adjacent RuvB subunits; this complex drives branch migration. In the full resolvosome a probable DNA-RuvA(4)-RuvB(12)-RuvC(2) complex forms which resolves the HJ.

It is found in the cytoplasm. Functionally, the RuvA-RuvB-RuvC complex processes Holliday junction (HJ) DNA during genetic recombination and DNA repair, while the RuvA-RuvB complex plays an important role in the rescue of blocked DNA replication forks via replication fork reversal (RFR). RuvA specifically binds to HJ cruciform DNA, conferring on it an open structure. The RuvB hexamer acts as an ATP-dependent pump, pulling dsDNA into and through the RuvAB complex. HJ branch migration allows RuvC to scan DNA until it finds its consensus sequence, where it cleaves and resolves the cruciform DNA. This chain is Holliday junction branch migration complex subunit RuvA, found in Salinibacter ruber (strain DSM 13855 / M31).